A 923-amino-acid chain; its full sequence is Transportin-3 (923 aa).

M1 bears the N-acetylmethionine mark. Position 74 is a phosphoserine (S74). Phosphothreonine occurs at positions 242 and 896.

Interacts with (GTP-bound) Ran. Interacts with (phosphorylated) SFRS1 and SFRS2; leading to their nuclear import. Interacts with NUP62. Interacts with RBM4. Interacts with CPSF6, promoting its nuclear import.

It localises to the nucleus envelope. The protein resides in the cytoplasm. Its function is as follows. Importin, which transports target proteins into the nucleus. Specifically mediates the nuclear import of splicing factor serine/arginine (SR) proteins, such as RBM4, SFRS1 and SFRS2, by recognizing phosphorylated SR domains. Also mediates the nuclear import of serine/arginine (SR) protein CPSF6, independently of CPSF6 phosphorylation. The nuclear import process is regulated by the small GTPase Ran that partitions between cytoplasm and nucleus in the predominantly GDP- and GTP-bound form, respectively. Importin associates with target cargo proteins in the cytoplasm, and the competitive binding of GTP-bound Ran induces the release of cargos in the nucleus. This chain is Transportin-3, found in Mus musculus (Mouse).